The following is a 417-amino-acid chain: Snake venom metalloproteinase aculysin-1 (417 aa).

The N-terminal stretch at 1-20 (MIQVLLVTICLAAFPYQGSS) is a signal peptide. Positions 21-189 (IMLESGKVND…KKPSWLNLTP (169 aa)) are excised as a propeptide. In terms of domain architecture, Peptidase M12B spans 197–392 (TSVNLQLIVD…KKPKCIHKKS (196 aa)). 3 disulfide bridges follow: Cys-308-Cys-387, Cys-349-Cys-371, and Cys-351-Cys-354. Zn(2+) is bound at residue His-333. Residue Glu-334 is part of the active site. Residues His-337 and His-343 each contribute to the Zn(2+) site. A propeptide spanning residues 393–417 (LKTDTVSTSVSGNEPLDDNVDGFHA) is cleaved from the precursor. A disordered region spans residues 398-417 (VSTSVSGNEPLDDNVDGFHA). Residues 407–417 (PLDDNVDGFHA) show a composition bias toward acidic residues.

The protein belongs to the venom metalloproteinase (M12B) family. P-I subfamily. Monomer. The cofactor is Zn(2+). In terms of tissue distribution, expressed by the venom gland.

It localises to the secreted. In terms of biological role, this protein is an alkaline zinc metalloprotease from snake venom that possesses weak hemorrhagic activity. This Deinagkistrodon acutus (Hundred-pace snake) protein is Snake venom metalloproteinase aculysin-1.